A 612-amino-acid polypeptide reads, in one-letter code: Dihydroxy-acid dehydratase (612 aa).

D81 is a Mg(2+) binding site. C122 lines the [2Fe-2S] cluster pocket. Mg(2+)-binding residues include D123 and K124. The residue at position 124 (K124) is an N6-carboxylysine. C195 contacts [2Fe-2S] cluster. E491 contributes to the Mg(2+) binding site. S517 serves as the catalytic Proton acceptor.

The protein belongs to the IlvD/Edd family. In terms of assembly, homodimer. Requires [2Fe-2S] cluster as cofactor. Mg(2+) serves as cofactor.

It catalyses the reaction (2R)-2,3-dihydroxy-3-methylbutanoate = 3-methyl-2-oxobutanoate + H2O. The catalysed reaction is (2R,3R)-2,3-dihydroxy-3-methylpentanoate = (S)-3-methyl-2-oxopentanoate + H2O. The protein operates within amino-acid biosynthesis; L-isoleucine biosynthesis; L-isoleucine from 2-oxobutanoate: step 3/4. Its pathway is amino-acid biosynthesis; L-valine biosynthesis; L-valine from pyruvate: step 3/4. Functions in the biosynthesis of branched-chain amino acids. Catalyzes the dehydration of (2R,3R)-2,3-dihydroxy-3-methylpentanoate (2,3-dihydroxy-3-methylvalerate) into 2-oxo-3-methylpentanoate (2-oxo-3-methylvalerate) and of (2R)-2,3-dihydroxy-3-methylbutanoate (2,3-dihydroxyisovalerate) into 2-oxo-3-methylbutanoate (2-oxoisovalerate), the penultimate precursor to L-isoleucine and L-valine, respectively. The protein is Dihydroxy-acid dehydratase of Rhizobium rhizogenes (strain K84 / ATCC BAA-868) (Agrobacterium radiobacter).